The primary structure comprises 334 residues: DNA-directed RNA polymerase subunit alpha (334 aa).

The segment at 1 to 234 is alpha N-terminal domain (alpha-NTD); the sequence is MQTKVNELLK…SQLAAFVELQ (234 aa). The interval 248–334 is alpha C-terminal domain (alpha-CTD); sequence IDPILLRPVD…LKDQDKKASG (87 aa).

The protein belongs to the RNA polymerase alpha chain family. Homodimer. The RNAP catalytic core consists of 2 alpha, 1 beta, 1 beta' and 1 omega subunit. When a sigma factor is associated with the core the holoenzyme is formed, which can initiate transcription.

The catalysed reaction is RNA(n) + a ribonucleoside 5'-triphosphate = RNA(n+1) + diphosphate. In terms of biological role, DNA-dependent RNA polymerase catalyzes the transcription of DNA into RNA using the four ribonucleoside triphosphates as substrates. The protein is DNA-directed RNA polymerase subunit alpha of Thioalkalivibrio sulfidiphilus (strain HL-EbGR7).